Consider the following 86-residue polypeptide: uncharacterized protein (86 aa).

This is an uncharacterized protein from Vaccinia virus (strain Copenhagen) (VACV).